Consider the following 695-residue polypeptide: Protein ACTIVITY OF BC1 COMPLEX KINASE 7, chloroplastic (695 aa).

A Protein kinase domain is found at 259-589 (EFEEQPIAAA…VQEIRKQADD (331 aa)). ATP contacts are provided by residues 265 to 273 (IAAASLGQV) and lysine 287. Aspartate 421 acts as the Proton acceptor in catalysis. 2 consecutive transmembrane segments (helical) span residues 633–653 (TILQMATMYTVLGGTLLNIGV) and 659–679 (GSQLVANGSFIGAGIFMLLVL).

This sequence belongs to the protein kinase superfamily. ADCK protein kinase family. As to expression, mostly expressed in leaves and flowers, and, to a lower extent, in roots.

It is found in the plastid. Its subcellular location is the chloroplast thylakoid membrane. The protein resides in the chloroplast. The protein localises to the plastoglobule. It catalyses the reaction L-seryl-[protein] + ATP = O-phospho-L-seryl-[protein] + ADP + H(+). The catalysed reaction is L-threonyl-[protein] + ATP = O-phospho-L-threonyl-[protein] + ADP + H(+). Its function is as follows. Involved in resistance to oxidative stress. Influences responses to reactive oxygen species (ROS) production. Regulates plastoglobules formation in thylakoids. Together with OSA1, regulates iron distribution within the chloroplast and mediates the oxidative stress response. Together with ABC1K8, influences chloroplast lipid synthesis/accumulation and modulates chloroplast membrane composition in response to stress. This Arabidopsis thaliana (Mouse-ear cress) protein is Protein ACTIVITY OF BC1 COMPLEX KINASE 7, chloroplastic.